Consider the following 254-residue polypeptide: Activity-regulated cytoskeleton associated protein 1 (254 aa).

This sequence belongs to the ARC/ARG3.1 family. As to quaternary structure, homooligomer; homooligomerizes into virion-like capsids. As to expression, expressed in a specific population of brain neurons, named E347, that are necessary and sufficient for proper body fat storage.

It is found in the extracellular vesicle membrane. The protein localises to the synapse. Its function is as follows. Master regulator of synaptic plasticity that self-assembles into virion-like capsids that encapsulate RNAs and mediate intercellular RNA transfer from motorneurons to muscles. Arc1 protein is released from motorneurons in extracellular vesicles that mediate the transfer of Arc1 mRNA into muscle cells, where Arc1 mRNA can undergo activity-dependent translation. Intercellular transfer od Arc1 mRNA is required for synaptic plasticity at the neuromuscular junction. May play a role in energy balance: required for regulation of body fat by a specific population of brain neurons, named E347, that are necessary and sufficient for proper body fat storage. This is Activity-regulated cytoskeleton associated protein 1 from Drosophila melanogaster (Fruit fly).